Reading from the N-terminus, the 227-residue chain is ATP phosphoribosyltransferase (227 aa).

This sequence belongs to the ATP phosphoribosyltransferase family. Short subfamily. Heteromultimer composed of HisG and HisZ subunits.

It is found in the cytoplasm. It carries out the reaction 1-(5-phospho-beta-D-ribosyl)-ATP + diphosphate = 5-phospho-alpha-D-ribose 1-diphosphate + ATP. The protein operates within amino-acid biosynthesis; L-histidine biosynthesis; L-histidine from 5-phospho-alpha-D-ribose 1-diphosphate: step 1/9. Its function is as follows. Catalyzes the condensation of ATP and 5-phosphoribose 1-diphosphate to form N'-(5'-phosphoribosyl)-ATP (PR-ATP). Has a crucial role in the pathway because the rate of histidine biosynthesis seems to be controlled primarily by regulation of HisG enzymatic activity. This Rhodospirillum rubrum (strain ATCC 11170 / ATH 1.1.1 / DSM 467 / LMG 4362 / NCIMB 8255 / S1) protein is ATP phosphoribosyltransferase.